A 329-amino-acid polypeptide reads, in one-letter code: NAD kinase (329 aa).

The interval 1 to 26 is disordered; it reads MTTPGTDHNADQGADSGDKATKAASG. The Proton acceptor role is filled by Asp104. Residues 104–105, Arg109, 179–180, Asp209, and 220–225 contribute to the NAD(+) site; these read DG, NE, and TAYAFS.

Belongs to the NAD kinase family. The cofactor is a divalent metal cation.

The protein localises to the cytoplasm. The enzyme catalyses NAD(+) + ATP = ADP + NADP(+) + H(+). Involved in the regulation of the intracellular balance of NAD and NADP, and is a key enzyme in the biosynthesis of NADP. Catalyzes specifically the phosphorylation on 2'-hydroxyl of the adenosine moiety of NAD to yield NADP. The chain is NAD kinase from Corynebacterium jeikeium (strain K411).